The chain runs to 344 residues: Mycothiol acetyltransferase (344 aa).

Glutamate 36 contributes to the 1D-myo-inositol 2-(L-cysteinylamino)-2-deoxy-alpha-D-glucopyranoside binding site. N-acetyltransferase domains lie at 40–179 (LALR…TPLP) and 187–344 (VTVR…PSTG). The segment at 61–83 (ADTSGPNVPDTPGDQNAADTSTM) is disordered. Over residues 73–83 (GDQNAADTSTM) the composition is skewed to polar residues. Acetyl-CoA is bound at residue 109–111 (VVV). 1D-myo-inositol 2-(L-cysteinylamino)-2-deoxy-alpha-D-glucopyranoside is bound by residues glutamate 214, lysine 253, and glutamate 272. Residues 276 to 278 (VGV) and 283 to 289 (GGAGLGR) contribute to the acetyl-CoA site. Tyrosine 310 is a binding site for 1D-myo-inositol 2-(L-cysteinylamino)-2-deoxy-alpha-D-glucopyranoside. Acetyl-CoA is bound at residue 315 to 320 (NVRAVR).

This sequence belongs to the acetyltransferase family. MshD subfamily. In terms of assembly, monomer.

It catalyses the reaction 1D-myo-inositol 2-(L-cysteinylamino)-2-deoxy-alpha-D-glucopyranoside + acetyl-CoA = mycothiol + CoA + H(+). In terms of biological role, catalyzes the transfer of acetyl from acetyl-CoA to desacetylmycothiol (Cys-GlcN-Ins) to form mycothiol. The protein is Mycothiol acetyltransferase of Frankia casuarinae (strain DSM 45818 / CECT 9043 / HFP020203 / CcI3).